The sequence spans 175 residues: uncharacterized protein (175 aa).

Over residues Met1–Asp17 the composition is skewed to basic and acidic residues. Residues Met1–Gly21 are disordered.

This is an uncharacterized protein from Bacillus thuringiensis subsp. kurstaki.